A 562-amino-acid chain; its full sequence is MDPDKEDKTLELMCSLPRSVWLGCSSVAESLCALRCLQSLPSSRAHNQNMTGMESQINTDEVSPKKTTVFKLGNGSLAGSRKRPSQGSFDKEKDLCIQLFDQWSESDQVEFVEHLIARMCHYQHGHINSYLKPMLQRDFITALPARGLDHIAENILSFLDARSLCSAELVCREWQRVISDGMLWKKLIERMVRTDPLWKGLSERHQWEKYLFKNRTNEVPPNSYYHSLYPKIIQDIETIEANWRCGRHNLQRIQCRSENSKGVYCLQYDDDKIISGLRDNSIKIWDKQSLECLKVLTGHTGSVLCLQYDERVIVTGSSDSTVRVWDVSSGEVLNTLIHHNEAVLHLRFCNGLMVTCSKDRSIAVWDMASATDISLRRVLVGHRAAVNVVDFDDKYIVSASGDRTIKVWSTSTCEFVRTLNGHKRGIACLQYRDRLVVSGSSDNTIRLWDIECGACLRVLEGHEELVRCIRFDNKRIVSGAYDGKIKVWDLQAALDPRAPASTLCLRTLVEHSGRVFRLQFDEFQIISSSHDDTILIWDFLNVSSNGQSDGRSPSRTYTYVSR.

The homodimerization domain D stretch occupies residues 87–136 (GSFDKEKDLCIQLFDQWSESDQVEFVEHLIARMCHYQHGHINSYLKPMLQ). In terms of domain architecture, F-box spans 149-187 (DHIAENILSFLDARSLCSAELVCREWQRVISDGMLWKKL). WD repeat units follow at residues 256–295 (RSEN…CLKV), 296–335 (LTGH…VLNT), 336–375 (LIHH…DISL), 379–418 (LVGH…FVRT), 419–458 (LNGH…CLRV), 459–491 (LEGH…WDLQ), and 508–538 (LVEH…LIWD).

Self-associates. Component of the SCF(FBXW11) complex.

The protein localises to the cytoplasm. It localises to the nucleus. Its pathway is protein modification; protein ubiquitination. In terms of biological role, substrate recognition component of a SCF (SKP1-CUL1-F-box protein) E3 ubiquitin-protein ligase complex which mediates the ubiquitination and subsequent proteasomal degradation of target proteins. Probably recognizes and binds to phosphorylated target proteins: the interaction with substrates requires the phosphorylation of the two serine residues in the substrates' destruction motif D-S-G-X(2,3,4)-S. SCF(FBXW11) mediates the ubiquitination of phosphorylated CTNNB1 and participates in Wnt signaling regulation. Participates in Wnt signaling regulation, and plays a role in eye and jaw development. SCF(FBXW11) plays a key role in NF-kappa-B activation by mediating ubiquitination of phosphorylated NFKBIA, leading to its degradation by the proteasome, thereby allowing the associated NF-kappa-B complex to translocate into the nucleus and to activate transcription. This Danio rerio (Zebrafish) protein is F-box and WD repeat domain-containing 11-A.